Reading from the N-terminus, the 41-residue chain is Fibrinogen beta chain (41 aa).

The interval 1 to 41 (ADDYDDEVLPDARGHRPIDRKREELPSLRPAPPPISGGGYR) is disordered. Tyr4 bears the Sulfotyrosine mark. Positions 10–26 (PDARGHRPIDRKREELP) are enriched in basic and acidic residues. Residues 14-16 (GHR) are beta-chain polymerization, binding distal domain of another fibrin.

Heterohexamer; disulfide linked. Contains 2 sets of 3 non-identical chains (alpha, beta and gamma). The 2 heterotrimers are in head to head conformation with the N-termini in a small central domain. In terms of processing, conversion of fibrinogen to fibrin is triggered by thrombin, which cleaves fibrinopeptides A and B from alpha and beta chains, and thus exposes the N-terminal polymerization sites responsible for the formation of the soft clot.

The protein localises to the secreted. In terms of biological role, cleaved by the protease thrombin to yield monomers which, together with fibrinogen alpha (FGA) and fibrinogen gamma (FGG), polymerize to form an insoluble fibrin matrix. Fibrin has a major function in hemostasis as one of the primary components of blood clots. In addition, functions during the early stages of wound repair to stabilize the lesion and guide cell migration during re-epithelialization. Was originally thought to be essential for platelet aggregation, based on in vitro studies using anticoagulated blood. However subsequent studies have shown that it is not absolutely required for thrombus formation in vivo. Enhances expression of SELP in activated platelets. Maternal fibrinogen is essential for successful pregnancy. Fibrin deposition is also associated with infection, where it protects against IFNG-mediated hemorrhage. May also facilitate the antibacterial immune response via both innate and T-cell mediated pathways. This Oryctolagus cuniculus (Rabbit) protein is Fibrinogen beta chain (FGB).